Consider the following 543-residue polypeptide: Oligopeptide-binding protein AppA (543 aa).

An N-terminal signal peptide occupies residues Met-1–Ala-23. Cys-24 is lipidated: N-palmitoyl cysteine. Cys-24 is lipidated: S-diacylglycerol cysteine.

The protein belongs to the bacterial solute-binding protein 5 family.

It is found in the cell membrane. In terms of biological role, this protein is a component of an oligopeptide permease, a binding protein-dependent transport system. This APP system can completely substitute for the OPP system in both sporulation and genetic competence. AppA can bind and transport tetra- and pentapeptides but not tripeptides. This chain is Oligopeptide-binding protein AppA (appA), found in Bacillus subtilis (strain 168).